The following is a 320-amino-acid chain: Pyrroline-5-carboxylate reductase 2 (320 aa).

The residue at position 2 (Ser2) is an N-acetylserine. NADP(+)-binding positions include 6-11 (IGAGQL) and Ser34. Ala8, Gln10, Leu11, Ser34, Glu36, Asn56, Val70, Lys71, and Ala97 together coordinate NADPH. Residues Asn56, 69–72 (AVKP), and 95–97 (CAA) contribute to the NADP(+) site. Residue Glu164 participates in L-proline binding. Residue Asn230 coordinates NADPH. L-proline-binding residues include Ala237 and Thr238. The interval 298–320 (TTLTPTSSGKLLTRSPVPGGKKD) is disordered. Position 304 is a phosphoserine (Ser304).

It belongs to the pyrroline-5-carboxylate reductase family. Homodecamer; composed of 5 homodimers. Interacts with LTO1.

It is found in the cytoplasm. The protein localises to the mitochondrion. The catalysed reaction is L-proline + NADP(+) = (S)-1-pyrroline-5-carboxylate + NADPH + 2 H(+). It catalyses the reaction L-proline + NAD(+) = (S)-1-pyrroline-5-carboxylate + NADH + 2 H(+). It functions in the pathway amino-acid biosynthesis; L-proline biosynthesis; L-proline from L-glutamate 5-semialdehyde: step 1/1. In terms of biological role, oxidoreductase that catalyzes the last step in proline biosynthesis, which corresponds to the reduction of pyrroline-5-carboxylate to L-proline using NAD(P)H. At physiologic concentrations, has higher specific activity in the presence of NADH. Involved in cellular response to oxidative stress. In some cell types, such as erythrocytes, its primary function may be the generation of NADP(+). The polypeptide is Pyrroline-5-carboxylate reductase 2 (PYCR2) (Bos taurus (Bovine)).